A 562-amino-acid polypeptide reads, in one-letter code: MTTTTTVKSDIEIAQEASMKKIQEIAAELNILEDELEPYGHYKGKLSLDIFKRLQNEKDGKVVLVTAINPTPAGEGKSTVTVGLGQAFNKIGKKTVIALREPSLGPTMGLKGGAAGGGFSQVVPMEDINLHFTGDIHAITTANNALAAFIDNHIQQGNTLGIDTRKIVWKRCVDLNDRALRNVVIGLGGPVQGVPREDGFDITVASEIMAVFCLATDIQDLKARLSRIVVAYNFANQPVTVKDLGVEGALTLLLKDALKPNLVQTLENTPAIIHGGPFANIAHGCNSVIATTMAAKLGDYVITEAGFGADLGAEKFLDIKARAAGIKPEAVVIVATIRALKMHGGVAKDQLKEENVDALAKGMENLQKHVETIQSFGVPFVIAINKFITDTDAEVAYLQEWCNERGYAVSLTEVWEKGGQGGVDLAEKVLKEIEKGENNYAPLYELELPLEEKIRTIAQKVYGAKDIEFAPKARKQLAQYEGEGWSNLPICMAKTQYSLSDDATKLGRPSDFIVTIRELKPSIGAGFIVALTGTMLTMPGLPKQPAALQMDVNEDGKAVGLF.

71 to 78 lines the ATP pocket; the sequence is TPAGEGKS.

The protein belongs to the formate--tetrahydrofolate ligase family.

It catalyses the reaction (6S)-5,6,7,8-tetrahydrofolate + formate + ATP = (6R)-10-formyltetrahydrofolate + ADP + phosphate. It participates in one-carbon metabolism; tetrahydrofolate interconversion. This is Formate--tetrahydrofolate ligase from Bacillus cereus (strain Q1).